A 195-amino-acid chain; its full sequence is Imidazoleglycerol-phosphate dehydratase (195 aa).

The protein belongs to the imidazoleglycerol-phosphate dehydratase family.

The protein resides in the cytoplasm. It catalyses the reaction D-erythro-1-(imidazol-4-yl)glycerol 3-phosphate = 3-(imidazol-4-yl)-2-oxopropyl phosphate + H2O. It functions in the pathway amino-acid biosynthesis; L-histidine biosynthesis; L-histidine from 5-phospho-alpha-D-ribose 1-diphosphate: step 6/9. This Azoarcus sp. (strain BH72) protein is Imidazoleglycerol-phosphate dehydratase.